Here is a 57-residue protein sequence, read N- to C-terminus: Potassium channel toxin MeuTXKalpha2 (57 aa).

The signal sequence occupies residues 1-19; the sequence is MSRLYAIILIALVFNVIMT. A propeptide spanning residues 20–28 is cleaved from the precursor; that stretch reads IMPDMKVEA. 3 disulfide bridges follow: Cys31–Cys47, Cys34–Cys52, and Cys38–Cys54.

Belongs to the short scorpion toxin superfamily. Potassium channel inhibitor family. Alpha-KTx 08 subfamily. Expressed by the venom gland.

Its subcellular location is the secreted. Functionally, inhibits Kv1.1/KCNA1, Kv1.3/KCNA3 and Shaker potassium channels. This Mesobuthus eupeus (Lesser Asian scorpion) protein is Potassium channel toxin MeuTXKalpha2.